The primary structure comprises 89 residues: Small ribosomal subunit protein bS20 (89 aa).

The segment covering 1 to 12 has biased composition (basic residues); the sequence is MANIKSAKKRAK. Residues 1–24 are disordered; sequence MANIKSAKKRAKQTVVRNERNTGQ.

Belongs to the bacterial ribosomal protein bS20 family.

Its function is as follows. Binds directly to 16S ribosomal RNA. This chain is Small ribosomal subunit protein bS20, found in Xanthomonas campestris pv. campestris (strain 8004).